The primary structure comprises 280 residues: Four and a half LIM domains protein 1 (280 aa).

Serine 2 is modified (N-acetylserine). Lysine 4 is subject to N6-acetyllysine. Residues 7-31 (CHYCRDPLQGKKYVQKDGRHCCLKC) form a C4-type zinc finger. LIM zinc-binding domains follow at residues 40-92 (CVEC…CNKC), 101-153 (CKGC…CVTC), 162-212 (CVKC…CVDC), and 221-276 (CAGC…CPDC). Lysine 86 participates in a covalent cross-link: Glycyl lysine isopeptide (Lys-Gly) (interchain with G-Cter in SUMO2).

The protein localises to the cytoplasm. In terms of biological role, may have an involvement in muscle development or hypertrophy. Isoform 2 binds to RBP-J and plays a negative regulatory role in the RBP-J-mediated transcription in mammalian systems. The chain is Four and a half LIM domains protein 1 (Fhl1) from Rattus norvegicus (Rat).